The primary structure comprises 316 residues: Ecto-ADP-ribosyltransferase 5 (316 aa).

An N-terminal signal peptide occupies residues 1–23; sequence MIQATLLISLSCLSFYTLGSGVR. A disulfide bridge connects residues Cys-50 and Cys-266. Asn-68 carries N-linked (GlcNAc...) asparagine glycosylation. The region spanning 70-261 is the TR mART core domain; sequence TRLRESWETA…MTLSSSDQMC (192 aa). Position 107 (Tyr-107) interacts with NAD(+). Asn-109 carries an N-linked (GlcNAc...) asparagine glycan. 2 residues coordinate NAD(+): Arg-168 and Gln-188. The active site involves Arg-168. The active site involves Ser-191. Ser-222 contributes to the NAD(+) binding site. Glu-229 is an active-site residue. 2 N-linked (GlcNAc...) asparagine glycosylation sites follow: Asn-242 and Asn-248.

This sequence belongs to the Arg-specific ADP-ribosyltransferase family.

It localises to the secreted. Its subcellular location is the membrane. The catalysed reaction is L-arginyl-[protein] + NAD(+) = N(omega)-(ADP-D-ribosyl)-L-arginyl-[protein] + nicotinamide + H(+). The sequence is that of Ecto-ADP-ribosyltransferase 5 (ART5) from Bos taurus (Bovine).